An 89-amino-acid chain; its full sequence is Transcription elongation factor 1 homolog (89 aa).

Residues Cys-25, Cys-28, Cys-49, and Cys-52 each contribute to the Zn(2+) site.

This sequence belongs to the ELOF1 family.

Its subcellular location is the nucleus. Transcription elongation factor implicated in the maintenance of proper chromatin structure in actively transcribed regions. This chain is Transcription elongation factor 1 homolog, found in Oryza sativa subsp. japonica (Rice).